Reading from the N-terminus, the 771-residue chain is MNPEERLVTWLISLGVLESPKKTVCDPEEFLKSSLKNGVVLCKLINRLLPGSVEKYCLEPQTEADCIDNINDFLKGCATLQVEVFEPDDLYSGANFSKVLNTLLAVNKATEDQLSERPCGRSSSLSAATSSQTNPQVAVPSTAPEQHSEEKAEMTENGSHQLIVKARFNFKQTNEDELSVCKGDIIYVTRVEEGGWWEGTLNGRTGWFPSNYVREIKPSERPLSPKAIKGFDTAPLTKNYYTVVLQNILDTEKEYAKELQSLLVTYLRPLQSNNNLSTVEFTCLLGNFEEVCTFQQTLCQALEECSKFPENQHKVGGCLLNLMPHFKSMYLAYCANHPSAVNVLTQHSDDLERFMENQGASSPGILILTTSLSKPFMRLEKYVTLLQELERHMEDTHPDHQDILKAIIAFKTLMGQCQDLRKRKQLELQILSEPIQAWEGDDIKTLGNVIFMSQVVMQHGACEEKEERYFLLFSSVLIMLSASPRMSGFMYQGKIPIAGMVVNRLDEIEGSDCMFEITGSTVERIVVHCNNNQDFQEWMEQLNRLTKGPTSCGSLSKTSSSSCSTHSSFSSTGQPRGPLEPPQIIKPWSLSCLRPAPPLRPSAALGYKERMSYILKESSKSPKTMKKFLHKRKTERKASEEEYVIRKSTAALEEDAQILKVIEAYCTSASFQQGTRKDSVPQVLLPEEEKLIIEETRSNGQTIIEEKSLVDTVYALKDEVKELKQENKKMKQCLEEELKSRKDLEKLVRKLLKQTDECIRSESSSKTSILQ.

A Calponin-homology (CH) domain is found at 1–111 (MNPEERLVTW…TLLAVNKATE (111 aa)). A disordered region spans residues 115–157 (SERPCGRSSSLSAATSSQTNPQVAVPSTAPEQHSEEKAEMTEN). The segment covering 122-131 (SSSLSAATSS) has biased composition (low complexity). S126 is subject to Phosphoserine. T133 is subject to Phosphothreonine. The SH3 domain occupies 159 to 218 (SHQLIVKARFNFKQTNEDELSVCKGDIIYVTRVEEGGWWEGTLNGRTGWFPSNYVREIKP). S224 carries the post-translational modification Phosphoserine. Residues 240 to 420 (YYTVVLQNIL…KTLMGQCQDL (181 aa)) form the DH domain. Residues 442-547 (DIKTLGNVIF…WMEQLNRLTK (106 aa)) enclose the PH domain. A Phosphoserine modification is found at S487. The span at 556–572 (SKTSSSSCSTHSSFSST) shows a compositional bias: low complexity. The interval 556 to 580 (SKTSSSSCSTHSSFSSTGQPRGPLE) is disordered. Phosphoserine occurs at positions 639 and 679.

Interacts with PAK kinases through the SH3 domain. Interacts with GIT1. Component of cytoplasmic complexes, which also contain PXN, GIT1 and PAK1. Interacts with BIN2. Identified in a complex with BIN2 and GIT2. Interacts with PARVB. Interacts with PARVG; the guanine nucleotide exchange factor activity of ARHGEF6 is essential for PARVG-induced enhancement of cell spreading. In terms of tissue distribution, detected in adult heart, spleen, lung, skeletal muscle, kidney and testis. Detected throughout embryogenesis.

Its subcellular location is the cell projection. It is found in the lamellipodium. Functionally, acts as a RAC1 guanine nucleotide exchange factor (GEF). The chain is Rho guanine nucleotide exchange factor 6 (Arhgef6) from Mus musculus (Mouse).